The sequence spans 421 residues: 4-hydroxy-3-methylbut-2-en-1-yl diphosphate synthase (flavodoxin) (421 aa).

The [4Fe-4S] cluster site is built by Cys311, Cys314, Cys357, and Glu364.

Belongs to the IspG family. Requires [4Fe-4S] cluster as cofactor.

The enzyme catalyses (2E)-4-hydroxy-3-methylbut-2-enyl diphosphate + oxidized [flavodoxin] + H2O + 2 H(+) = 2-C-methyl-D-erythritol 2,4-cyclic diphosphate + reduced [flavodoxin]. It participates in isoprenoid biosynthesis; isopentenyl diphosphate biosynthesis via DXP pathway; isopentenyl diphosphate from 1-deoxy-D-xylulose 5-phosphate: step 5/6. In terms of biological role, converts 2C-methyl-D-erythritol 2,4-cyclodiphosphate (ME-2,4cPP) into 1-hydroxy-2-methyl-2-(E)-butenyl 4-diphosphate. The chain is 4-hydroxy-3-methylbut-2-en-1-yl diphosphate synthase (flavodoxin) from Xanthomonas axonopodis pv. citri (strain 306).